The primary structure comprises 68 residues: Large ribosomal subunit protein uL29 (68 aa).

The protein belongs to the universal ribosomal protein uL29 family.

This chain is Large ribosomal subunit protein uL29 (rpl29), found in Pyrococcus abyssi (strain GE5 / Orsay).